We begin with the raw amino-acid sequence, 93 residues long: Antitoxin RelF (93 aa).

The protein belongs to the phD/YefM antitoxin family. In terms of assembly, interacts with toxin RelG, which neutralizes the toxin. Also interacts with toxins RelE and RelK in vitro, in M.smegmatis coexpression with non-cognate toxins increases the toxicity of RelE but not of RelK.

Its function is as follows. Antitoxin component of a type II toxin-antitoxin (TA) system. Upon expression in M.smegmatis neutralizes the effect of toxin RelE2. Functionally, induces its own promoter, in combination with RelG represses its own promoter. Has been seen to bind DNA in complex with toxin RelG but not alone. This chain is Antitoxin RelF (relF), found in Mycobacterium tuberculosis (strain ATCC 25618 / H37Rv).